A 538-amino-acid polypeptide reads, in one-letter code: Protein NRT1/ PTR FAMILY 5.11 (538 aa).

A run of 2 helical transmembrane segments spans residues 44 to 64 (FAYF…LGES) and 74 to 94 (AWTG…DSYL). Residue Thr99 is modified to Phosphothreonine. Transmembrane regions (helical) follow at residues 100–120 (IIIS…STMI), 134–154 (TIFF…NPCI), 175–194 (SFFN…TRLV), 204–224 (WSLG…LFLL), 308–328 (IPIW…PTFF), 342–362 (GLLV…VVFI), 389–409 (IGTG…VETK), 424–444 (VWWL…TMVG), 463–483 (ALNL…ISVI), and 507–527 (YFYW…LWFA).

The protein belongs to the major facilitator superfamily. Proton-dependent oligopeptide transporter (POT/PTR) (TC 2.A.17) family. Expressed in shoots and roots.

The protein localises to the membrane. This is Protein NRT1/ PTR FAMILY 5.11 (NPF5.11) from Arabidopsis thaliana (Mouse-ear cress).